The sequence spans 92 residues: Small ribosomal subunit protein uS19 (92 aa).

This sequence belongs to the universal ribosomal protein uS19 family.

In terms of biological role, protein S19 forms a complex with S13 that binds strongly to the 16S ribosomal RNA. The protein is Small ribosomal subunit protein uS19 of Limosilactobacillus reuteri (strain DSM 20016) (Lactobacillus reuteri).